We begin with the raw amino-acid sequence, 246 residues long: MFPVKVKVEKSELEMAKARNQLDAVLQCLLEKSHMDRERLDEEPGKTSLDTHNKDCSITATGKRPSARFPHQRRKKRREMDEGLAEGGPQRSNTYVIKLFDRSVDLAQFSENTPLYPICRAWMRNSPTVRERERSPSSPLPPLPEDEEGSEVTNSKSRDVYKLPPPTAPGPPGDACRSRIPSPLQPETQGTPDDEPSEPEPSPSTLIYRNMQRWKRIRQRWKEASHRNQLRYSESMKILREMYERQ.

Met1 is subject to N-acetylmethionine. Glycyl lysine isopeptide (Lys-Gly) (interchain with G-Cter in SUMO2) cross-links involve residues Lys5 and Lys7. Residues 36-55 are compositionally biased toward basic and acidic residues; it reads DRERLDEEPGKTSLDTHNKD. Disordered stretches follow at residues 36 to 90 and 127 to 209; these read DRER…GGPQ and PTVR…LIYR. Residues Ser135 and Ser138 each carry the phosphoserine modification. The segment covering 163-172 has biased composition (pro residues); the sequence is LPPPTAPGPP. Phosphothreonine is present on Thr167. Ser182 and Ser202 each carry phosphoserine.

In terms of assembly, component of the DREAM complex (also named LINC complex) at least composed of E2F4, E2F5, LIN9, LIN37, LIN52, LIN54, MYBL1, MYBL2, RBL1, RBL2, RBBP4, TFDP1 and TFDP2. The complex exists in quiescent cells where it represses cell cycle-dependent genes. It dissociates in S phase when LIN9, LIN37, LIN52 and LIN54 form a subcomplex that binds to MYBL2.

The protein is Protein lin-37 homolog (LIN37) of Bos taurus (Bovine).